The primary structure comprises 615 residues: Sodium-dependent neutral amino acid transporter B(0)AT3 (615 aa).

The Cytoplasmic portion of the chain corresponds to 1-26; it reads MAQASGMDPLVDIEDERPKWDNKLQY. Residues 27 to 47 traverse the membrane as a helical segment; that stretch reads LLSCIGFAVGLGNIWRFPYLC. At 48–52 the chain is on the extracellular side; it reads QTHGG. A helical transmembrane segment spans residues 53–73; it reads GAFLIPYFIALVFEGIPLFYI. The Cytoplasmic portion of the chain corresponds to 74-105; that stretch reads ELAIGQRLRRGSIGVWKTISPYLGGVGLGCFS. Residues 106–126 traverse the membrane as a helical segment; sequence VSFLVSLYYNTVLLWVLWFFL. The Extracellular portion of the chain corresponds to 127–177; it reads NSFQHPLPWSTCPLDLNRTGFVQECQSSGTVSYFWYRQTLNITSDISNTGT. N-linked (GlcNAc...) asparagine glycans are attached at residues Asn143 and Asn167. A helical transmembrane segment spans residues 178 to 198; the sequence is IQWKLFLCLVACWSTVYLCVI. Residues 199–206 are Cytoplasmic-facing; that stretch reads RGIESTGK. Residues 207–227 traverse the membrane as a helical segment; that stretch reads VIYFTALFPYLVLTIFLIRGL. The Extracellular portion of the chain corresponds to 228 to 255; it reads TLPGATEGLIYLFTPNMKTLQNPRVWLD. A helical membrane pass occupies residues 256–276; sequence AATQIFFSLSLAFGGHIAFAS. Residues 277–288 are Cytoplasmic-facing; it reads YNPPRNNCEKDA. Residues 289-309 form a helical membrane-spanning segment; sequence VIIALVNSMTSLYASIAIFSV. Over 310 to 397 the chain is Extracellular; that stretch reads MGFKASNDYG…FTEAVLHMPG (88 aa). N-linked (GlcNAc...) asparagine glycosylation is present at Asn353. A helical membrane pass occupies residues 398–418; that stretch reads ASVWSVLFFGMLFTLGLSSMF. The Cytoplasmic portion of the chain corresponds to 419 to 441; that stretch reads GNMEGVITPLLDMGILPKGIPKE. A helical transmembrane segment spans residues 442 to 462; sequence VMTGVICFACFLSAICFTLQS. The Extracellular portion of the chain corresponds to 463–472; that stretch reads GGYWLEIFDS. The chain crosses the membrane as a helical span at residues 473–493; that stretch reads FAASLNLIIFAFMEVVGVIHI. Topologically, residues 494-520 are cytoplasmic; that stretch reads YGMKRFCDDIEWMTGRRPGLYWQVTWR. Residues 521-541 traverse the membrane as a helical segment; the sequence is VVSPMLLFGIFLSYIVLLIQT. At 542–570 the chain is on the extracellular side; that stretch reads PPSYKAWNPQYEHFPSREEKFYPGWVQVT. Residues 571 to 591 form a helical membrane-spanning segment; sequence CVLLSFLPSLWVPGVALAQLL. Topologically, residues 592–615 are cytoplasmic; sequence SQYKQRWKATHLESGLKLQESRGC.

Belongs to the sodium:neurotransmitter symporter (SNF) (TC 2.A.22) family. SLC6A18 subfamily. As to quaternary structure, interacts with CLTRN; this interaction regulates the trafficking of SLC6A18 to the cell membrane and its activity. As to expression, expressed predominantly in kidney.

Its subcellular location is the apical cell membrane. It localises to the cell membrane. The enzyme catalyses L-alanine(out) + chloride(out) + 2 Na(+)(out) = L-alanine(in) + chloride(in) + 2 Na(+)(in). It carries out the reaction glycine(out) + chloride(out) + 2 Na(+)(out) = glycine(in) + chloride(in) + 2 Na(+)(in). It catalyses the reaction L-methionine(out) + chloride(out) + 2 Na(+)(out) = L-methionine(in) + chloride(in) + 2 Na(+)(in). The catalysed reaction is L-valine(out) + chloride(out) + 2 Na(+)(out) = L-valine(in) + chloride(in) + 2 Na(+)(in). The enzyme catalyses L-isoleucine(out) + chloride(out) + 2 Na(+)(out) = L-isoleucine(in) + chloride(in) + 2 Na(+)(in). It carries out the reaction L-serine(out) + chloride(out) + 2 Na(+)(out) = L-serine(in) + chloride(in) + 2 Na(+)(in). It catalyses the reaction L-leucine(out) + chloride(out) + 2 Na(+)(out) = L-leucine(in) + chloride(in) + 2 Na(+)(in). Its function is as follows. Symporter that transports one amino acid molecule together with two sodium and one chloride ions in kidneys and plays a role in the neutral amino acids reabsorption. Preferentially transports neutral amino acids such as L-glycine and L-alanine but also other neutral amino acids. Required CLTRN for cell surface expression and for its amino acid transporter activity. The transport mechanism is pH-independent. The sequence is that of Sodium-dependent neutral amino acid transporter B(0)AT3 from Mus musculus (Mouse).